The chain runs to 159 residues: Transcription elongation factor GreA (159 aa).

This sequence belongs to the GreA/GreB family.

Its function is as follows. Necessary for efficient RNA polymerase transcription elongation past template-encoded arresting sites. The arresting sites in DNA have the property of trapping a certain fraction of elongating RNA polymerases that pass through, resulting in locked ternary complexes. Cleavage of the nascent transcript by cleavage factors such as GreA or GreB allows the resumption of elongation from the new 3'terminus. GreA releases sequences of 2 to 3 nucleotides. The sequence is that of Transcription elongation factor GreA from Psychromonas ingrahamii (strain DSM 17664 / CCUG 51855 / 37).